The following is an 83-amino-acid chain: uncharacterized protein (83 aa).

It belongs to the chlamydial CPn_0711/CT_665/TC_0036 family.

This is an uncharacterized protein from Chlamydia trachomatis serovar D (strain ATCC VR-885 / DSM 19411 / UW-3/Cx).